Here is a 188-residue protein sequence, read N- to C-terminus: MTRPEASGPPDATRLGHLLGPHGVQGGIKLYVLGDPAQVLALKRVYVESRGWLSLRRAEGMPPNLVLYLAGVSSREGAEELRGLQVYATDAELPDLEEGTFYYHDLRGLEVYGAGGERLGTVSDVMDAGHQDLLVVDYGGGTSFVPLQAPYVEVPLAGGKPGAVHLTADAPAGLIGPEPGEEDGAAES.

Positions 98-174 (EGTFYYHDLR…HLTADAPAGL (77 aa)) constitute a PRC barrel domain. The tract at residues 169-188 (DAPAGLIGPEPGEEDGAAES) is disordered. The segment covering 179–188 (PGEEDGAAES) has biased composition (acidic residues).

This sequence belongs to the RimM family. In terms of assembly, binds ribosomal protein uS19.

It is found in the cytoplasm. Functionally, an accessory protein needed during the final step in the assembly of 30S ribosomal subunit, possibly for assembly of the head region. Essential for efficient processing of 16S rRNA. May be needed both before and after RbfA during the maturation of 16S rRNA. It has affinity for free ribosomal 30S subunits but not for 70S ribosomes. The sequence is that of Ribosome maturation factor RimM from Deinococcus radiodurans (strain ATCC 13939 / DSM 20539 / JCM 16871 / CCUG 27074 / LMG 4051 / NBRC 15346 / NCIMB 9279 / VKM B-1422 / R1).